Consider the following 92-residue polypeptide: Elongation factor 1-beta (92 aa).

It belongs to the EF-1-beta/EF-1-delta family.

In terms of biological role, promotes the exchange of GDP for GTP in EF-1-alpha/GDP, thus allowing the regeneration of EF-1-alpha/GTP that could then be used to form the ternary complex EF-1-alpha/GTP/AAtRNA. This Pyrobaculum aerophilum (strain ATCC 51768 / DSM 7523 / JCM 9630 / CIP 104966 / NBRC 100827 / IM2) protein is Elongation factor 1-beta (ef1b).